The sequence spans 359 residues: Phosphoserine aminotransferase (359 aa).

Residue R41 coordinates L-glutamate. Residues W101, T151, D170, and Q193 each contribute to the pyridoxal 5'-phosphate site. K194 carries the N6-(pyridoxal phosphate)lysine modification. 235 to 236 (NT) contributes to the pyridoxal 5'-phosphate binding site.

Belongs to the class-V pyridoxal-phosphate-dependent aminotransferase family. SerC subfamily. In terms of assembly, homodimer. It depends on pyridoxal 5'-phosphate as a cofactor.

The protein localises to the cytoplasm. The catalysed reaction is O-phospho-L-serine + 2-oxoglutarate = 3-phosphooxypyruvate + L-glutamate. The enzyme catalyses 4-(phosphooxy)-L-threonine + 2-oxoglutarate = (R)-3-hydroxy-2-oxo-4-phosphooxybutanoate + L-glutamate. The protein operates within amino-acid biosynthesis; L-serine biosynthesis; L-serine from 3-phospho-D-glycerate: step 2/3. Its pathway is cofactor biosynthesis; pyridoxine 5'-phosphate biosynthesis; pyridoxine 5'-phosphate from D-erythrose 4-phosphate: step 3/5. In terms of biological role, catalyzes the reversible conversion of 3-phosphohydroxypyruvate to phosphoserine and of 3-hydroxy-2-oxo-4-phosphonooxybutanoate to phosphohydroxythreonine. The chain is Phosphoserine aminotransferase from Laribacter hongkongensis (strain HLHK9).